Here is a 657-residue protein sequence, read N- to C-terminus: Serine/threonine kinase NLK (657 aa).

One can recognise a Protein kinase domain in the interval 208-554 (SQPDRPIGYG…VEEALSHPYL (347 aa)). ATP is bound by residues 214–222 (IGYGAFGVV) and lysine 237. The Proton acceptor role is filled by aspartate 391.

Belongs to the protein kinase superfamily. Ser/Thr protein kinase family. Component of the beta-catenin-lit-1 complex (also called the lit-1/wrm-1 complex or the wrm-1/lit-1 kinase complex) at least composed of lit-1 and wrm-1. Interacts with wrm-1 (via N-terminus); the interaction is direct and activates lit-1 kinase activity which leads to the phosphorylation of pop-1. This promotes pop-1 interaction with par-5 and translocation of pop-1 from the nucleus to the cytoplasm. Interacts with pop-1 (when phosphorylated on 'Ser-125'); the interaction is dependent on the beta-catenin-lit-1 complex. Mg(2+) serves as cofactor.

It is found in the cytoplasm. The protein resides in the cell cortex. Its subcellular location is the nucleus. The enzyme catalyses L-seryl-[protein] + ATP = O-phospho-L-seryl-[protein] + ADP + H(+). It catalyses the reaction L-threonyl-[protein] + ATP = O-phospho-L-threonyl-[protein] + ADP + H(+). In terms of biological role, has a role in the Wnt signaling pathway controlling the asymmetry of cell divisions during embryogenesis. Operates in the AB and EMS cell lineages influencing cell specification. Required for body wall muscle development, endoderm development, pop-1 asymmetry and T-cell division asymmetry. Component of the beta-catenin-lit-1 complex which promotes the phosphorylation, down-regulation and subcellular relocation of pop-1. Regulates plp-1 nuclear localization in embryos. Plays a role in male tail tip morphogenesis. The protein is Serine/threonine kinase NLK of Caenorhabditis briggsae.